The sequence spans 241 residues: DNA repair protein RecO (241 aa).

The protein belongs to the RecO family.

Involved in DNA repair and RecF pathway recombination. In Dinoroseobacter shibae (strain DSM 16493 / NCIMB 14021 / DFL 12), this protein is DNA repair protein RecO.